A 122-amino-acid chain; its full sequence is Large ribosomal subunit protein uL18 (122 aa).

It belongs to the universal ribosomal protein uL18 family. As to quaternary structure, part of the 50S ribosomal subunit; part of the 5S rRNA/L5/L18/L25 subcomplex. Contacts the 5S and 23S rRNAs.

This is one of the proteins that bind and probably mediate the attachment of the 5S RNA into the large ribosomal subunit, where it forms part of the central protuberance. The protein is Large ribosomal subunit protein uL18 of Leptospira borgpetersenii serovar Hardjo-bovis (strain JB197).